Consider the following 413-residue polypeptide: Serine hydroxymethyltransferase (413 aa).

(6S)-5,6,7,8-tetrahydrofolate contacts are provided by residues Leu-120 and 124-126 (GHL). An N6-(pyridoxal phosphate)lysine modification is found at Lys-228.

The protein belongs to the SHMT family. In terms of assembly, homodimer. Pyridoxal 5'-phosphate serves as cofactor.

It is found in the cytoplasm. The catalysed reaction is (6R)-5,10-methylene-5,6,7,8-tetrahydrofolate + glycine + H2O = (6S)-5,6,7,8-tetrahydrofolate + L-serine. Its pathway is one-carbon metabolism; tetrahydrofolate interconversion. It participates in amino-acid biosynthesis; glycine biosynthesis; glycine from L-serine: step 1/1. Functionally, catalyzes the reversible interconversion of serine and glycine with tetrahydrofolate (THF) serving as the one-carbon carrier. This reaction serves as the major source of one-carbon groups required for the biosynthesis of purines, thymidylate, methionine, and other important biomolecules. Also exhibits THF-independent aldolase activity toward beta-hydroxyamino acids, producing glycine and aldehydes, via a retro-aldol mechanism. The sequence is that of Serine hydroxymethyltransferase from Agathobacter rectalis (strain ATCC 33656 / DSM 3377 / JCM 17463 / KCTC 5835 / VPI 0990) (Eubacterium rectale).